The sequence spans 434 residues: Bifunctional protein GlmU (434 aa).

Positions 1–226 (MNKNKISIVI…ENEYKGVNSK (226 aa)) are pyrophosphorylase. UDP-N-acetyl-alpha-D-glucosamine contacts are provided by residues 11–14 (LAAG), Lys25, Gln77, and 84–85 (GT). Residue Asp105 participates in Mg(2+) binding. The UDP-N-acetyl-alpha-D-glucosamine site is built by Gly138, Glu152, Asn167, and Asn224. Asn224 provides a ligand contact to Mg(2+). The tract at residues 227–247 (KDLSDAEIIMQDKIKNSLMES) is linker. Residues 248–434 (GVTMQLPSTI…DFYYKFFAKK (187 aa)) are N-acetyltransferase. The UDP-N-acetyl-alpha-D-glucosamine site is built by Arg311 and Lys328. Catalysis depends on His339, which acts as the Proton acceptor. UDP-N-acetyl-alpha-D-glucosamine is bound by residues Tyr342 and Asn353. Acetyl-CoA is bound by residues Ala356, 362 to 363 (NY), Ser381, and Ala399.

In the N-terminal section; belongs to the N-acetylglucosamine-1-phosphate uridyltransferase family. The protein in the C-terminal section; belongs to the transferase hexapeptide repeat family. In terms of assembly, homotrimer. It depends on Mg(2+) as a cofactor.

It is found in the cytoplasm. It carries out the reaction alpha-D-glucosamine 1-phosphate + acetyl-CoA = N-acetyl-alpha-D-glucosamine 1-phosphate + CoA + H(+). It catalyses the reaction N-acetyl-alpha-D-glucosamine 1-phosphate + UTP + H(+) = UDP-N-acetyl-alpha-D-glucosamine + diphosphate. It participates in nucleotide-sugar biosynthesis; UDP-N-acetyl-alpha-D-glucosamine biosynthesis; N-acetyl-alpha-D-glucosamine 1-phosphate from alpha-D-glucosamine 6-phosphate (route II): step 2/2. Its pathway is nucleotide-sugar biosynthesis; UDP-N-acetyl-alpha-D-glucosamine biosynthesis; UDP-N-acetyl-alpha-D-glucosamine from N-acetyl-alpha-D-glucosamine 1-phosphate: step 1/1. The protein operates within bacterial outer membrane biogenesis; LPS lipid A biosynthesis. Catalyzes the last two sequential reactions in the de novo biosynthetic pathway for UDP-N-acetylglucosamine (UDP-GlcNAc). The C-terminal domain catalyzes the transfer of acetyl group from acetyl coenzyme A to glucosamine-1-phosphate (GlcN-1-P) to produce N-acetylglucosamine-1-phosphate (GlcNAc-1-P), which is converted into UDP-GlcNAc by the transfer of uridine 5-monophosphate (from uridine 5-triphosphate), a reaction catalyzed by the N-terminal domain. This Sulfurimonas denitrificans (strain ATCC 33889 / DSM 1251) (Thiomicrospira denitrificans (strain ATCC 33889 / DSM 1251)) protein is Bifunctional protein GlmU.